A 64-amino-acid chain; its full sequence is Large ribosomal subunit protein bL35 (64 aa).

The protein belongs to the bacterial ribosomal protein bL35 family.

This is Large ribosomal subunit protein bL35 from Lactiplantibacillus plantarum (strain ATCC BAA-793 / NCIMB 8826 / WCFS1) (Lactobacillus plantarum).